We begin with the raw amino-acid sequence, 257 residues long: Phosphatidylglycerol--prolipoprotein diacylglyceryl transferase (257 aa).

The next 4 membrane-spanning stretches (helical) occupy residues 8–28, 48–68, 84–104, and 109–129; these read IFGL…ILAY, VFIV…VIFN, EGGL…YLMS, and LNFL…QAIG. A 1,2-diacyl-sn-glycero-3-phospho-(1'-sn-glycerol) is bound at residue R130. 3 helical membrane-spanning segments follow: residues 169 to 189, 196 to 216, and 225 to 245; these read PTFL…LLIT, GSIF…IEGL, and SLRM…ILII.

It belongs to the Lgt family.

It localises to the cell membrane. The enzyme catalyses L-cysteinyl-[prolipoprotein] + a 1,2-diacyl-sn-glycero-3-phospho-(1'-sn-glycerol) = an S-1,2-diacyl-sn-glyceryl-L-cysteinyl-[prolipoprotein] + sn-glycerol 1-phosphate + H(+). The protein operates within protein modification; lipoprotein biosynthesis (diacylglyceryl transfer). Functionally, catalyzes the transfer of the diacylglyceryl group from phosphatidylglycerol to the sulfhydryl group of the N-terminal cysteine of a prolipoprotein, the first step in the formation of mature lipoproteins. In Clostridium novyi (strain NT), this protein is Phosphatidylglycerol--prolipoprotein diacylglyceryl transferase.